The following is a 123-amino-acid chain: WAP four-disulfide core domain protein 5 (123 aa).

The signal sequence occupies residues 1–24 (MRIQSLLLLGALLAVGSQLPAVFG). WAP domains lie at 27–73 (KGEK…CVPR) and 74–121 (VSVK…RDPA). 8 disulfide bridges follow: cysteine 34–cysteine 62, cysteine 41–cysteine 66, cysteine 49–cysteine 61, cysteine 55–cysteine 70, cysteine 81–cysteine 109, cysteine 88–cysteine 113, cysteine 96–cysteine 108, and cysteine 102–cysteine 117.

The protein resides in the secreted. Putative acid-stable proteinase inhibitor. This Papio anubis (Olive baboon) protein is WAP four-disulfide core domain protein 5 (WFDC5).